The following is a 203-amino-acid chain: Peptide deformylase (203 aa).

The Fe cation site is built by C121 and H163. E164 is an active-site residue. A Fe cation-binding site is contributed by H167.

It belongs to the polypeptide deformylase family. Fe(2+) serves as cofactor.

The enzyme catalyses N-terminal N-formyl-L-methionyl-[peptide] + H2O = N-terminal L-methionyl-[peptide] + formate. Its function is as follows. Removes the formyl group from the N-terminal Met of newly synthesized proteins. Requires at least a dipeptide for an efficient rate of reaction. N-terminal L-methionine is a prerequisite for activity but the enzyme has broad specificity at other positions. The chain is Peptide deformylase from Prochlorococcus marinus (strain SARG / CCMP1375 / SS120).